We begin with the raw amino-acid sequence, 950 residues long: Oxysterol-binding protein-related protein 1 (950 aa).

The tract at residues methionine 1–arginine 237 is interaction with RAB7A. ANK repeat units lie at residues leucine 47–methionine 76, methionine 80–valine 109, and leucine 175–leucine 204. The PH domain maps to leucine 235–alanine 334. The stretch at asparagine 430 to glutamate 463 forms a coiled coil. The FFAT motif lies at serine 469–serine 483. The residue at position 499 (serine 499) is a Phosphoserine. Disordered stretches follow at residues glutamate 502–isoleucine 530 and lysine 795–serine 821. A coiled-coil region spans residues arginine 879–aspartate 913.

It belongs to the OSBP family. As to quaternary structure, interacts (via FFAT motif) with VAPA and VAPB. Interacts with the GTP-bound form of RAB7A. Interacts with OAS1B. Interacts (via FFAT motif) with MOSPD2 (via MSP domain). As to expression, ubiquitous.

It is found in the late endosome. Functionally, binds phospholipids; exhibits strong binding to phosphatidic acid and weak binding to phosphatidylinositol 3-phosphate. Stabilizes GTP-bound RAB7A on late endosomes/lysosomes and alters functional properties of late endocytic compartments via its interaction with RAB7A. Binds 25-hydroxycholesterol and cholesterol. In Mus musculus (Mouse), this protein is Oxysterol-binding protein-related protein 1.